Consider the following 549-residue polypeptide: MVFKKIKTQIDHALKQLNLPTDVEYLIQQTKNIQFGDFSSNVAMVLSKRQNKNPQEIAKQIIEQLNPNEFEKITFSKPGFINFFLSNQDKLVVLKRLQETNYSVEKLPKEEQESINIEFVSANPTGFLHLGHVRNAYTGDVLSNILRAVGHNVTKEYWINDLGNQVSLFALSTIIRYLQELGINKYELPDDSYHGKEPIFVAEEMIKDFGNKYQDIKIEDNKIVDSKIANELTQYCTNKMLHFIKQDLESIGVKMDVWTSEKVVYQSNTLTELLNNQLKDHIYEQDGAVWLRTTDGGDDKDRVIIKENKQPTYYGTDIANHYLKHKRGFDRLINVWGADHFGHILRTAYAAELTGIKKGKFVVVLIEMVKLLKDNKEIKFSKRLGNAISIPDMLEFLSKDASRWFMLNQSWTSGIRIDVDLTNKKDSSNPVYYVQYAHARIHKLLTKAEHIDLNKVNLSLLNSDVERTMVNYLASFEHYVHNVATTYEVNKLLNFVYTLTQSFHSWYNSHEILNQKDEIKQTRLLLAKAIKNLINYLLSLFGIEAVEQM.

The short motif at 122 to 132 is the 'HIGH' region element; it reads ANPTGFLHLGH.

It belongs to the class-I aminoacyl-tRNA synthetase family. As to quaternary structure, monomer.

Its subcellular location is the cytoplasm. It catalyses the reaction tRNA(Arg) + L-arginine + ATP = L-arginyl-tRNA(Arg) + AMP + diphosphate. The sequence is that of Arginine--tRNA ligase from Mycoplasmoides gallisepticum (strain R(low / passage 15 / clone 2)) (Mycoplasma gallisepticum).